Here is a 116-residue protein sequence, read N- to C-terminus: Ig heavy chain V region 1B43 (116 aa).

The signal sequence occupies residues 1 to 18 (MRVLILLCLFTAFPGILS). The tract at residues 19–48 (DVQLQESGPDLVKPSQSLSLTCTVTGYSIT) is framework-1. Cys-40 and Cys-114 form a disulfide bridge. The interval 49 to 53 (SGYSW) is complementarity-determining-1. Residues 54 to 67 (HWIRQFPGNKLEWM) form a framework-2 region. A complementarity-determining-2 region spans residues 68–84 (GYIHYSGNTSYNPSLKS). Positions 85-116 (RISITRDTSKNQFFLQLNSVTTEDTATYYCAR) are framework-3.

In Mus musculus (Mouse), this protein is Ig heavy chain V region 1B43.